Consider the following 525-residue polypeptide: Protein disulfide-isomerase A2 (525 aa).

An N-terminal signal peptide occupies residues 1–21 (MSRQLLPVLLLLLLRASCPWG). Positions 27 to 152 (RSPSEEPPEE…IAEWLRRRVG (126 aa)) constitute a Thioredoxin 1 domain. Active-site nucleophile residues include cysteine 71 and cysteine 74. A disulfide bridge connects residues cysteine 71 and cysteine 74. N-linked (GlcNAc...) asparagine glycosylation is found at asparagine 127 and asparagine 284. The Thioredoxin 2 domain occupies 367-496 (VLNGQVKPYL…FSKFLDNGGV (130 aa)). Catalysis depends on nucleophile residues cysteine 418 and cysteine 421. Cysteine 418 and cysteine 421 form a disulfide bridge. Residues 492–525 (DNGGVLPTEEPPEEPAAPFPEPPANSTMGSKEEL) are disordered. The segment covering 505 to 514 (EPAAPFPEPP) has biased composition (pro residues). Asparagine 516 is a glycosylation site (N-linked (GlcNAc...) asparagine). Positions 516 to 525 (NSTMGSKEEL) are enriched in polar residues. A Prevents secretion from ER motif is present at residues 522-525 (KEEL).

This sequence belongs to the protein disulfide isomerase family. In terms of assembly, monomer; predominantly as monomer under reducing conditions. Homodimer; disulfide-linked. Part of a large chaperone multiprotein complex comprising DNAJB11, HSP90B1, HSPA5, HYOU, PDIA2, PDIA4, PDIA6, PPIB, SDF2L1, UGGT1 and very small amounts of ERP29, but not, or at very low levels, CALR nor CANX. Post-translationally, the disulfide-linked homodimer exhibits an enhanced chaperone activity. Glycosylated. As to expression, highly expressed in pancreas (at protein level).

It is found in the endoplasmic reticulum lumen. It carries out the reaction Catalyzes the rearrangement of -S-S- bonds in proteins.. Acts as an intracellular estrogen-binding protein. May be involved in modulating cellular levels and biological functions of estrogens in the pancreas. May act as a chaperone that inhibits aggregation of misfolded proteins. The chain is Protein disulfide-isomerase A2 (PDIA2) from Homo sapiens (Human).